A 252-amino-acid chain; its full sequence is tRNA (guanine-N(1)-)-methyltransferase (252 aa).

Residues glycine 113 and 133–138 (IGDYVL) contribute to the S-adenosyl-L-methionine site.

It belongs to the RNA methyltransferase TrmD family. In terms of assembly, homodimer.

The protein resides in the cytoplasm. The catalysed reaction is guanosine(37) in tRNA + S-adenosyl-L-methionine = N(1)-methylguanosine(37) in tRNA + S-adenosyl-L-homocysteine + H(+). Functionally, specifically methylates guanosine-37 in various tRNAs. The chain is tRNA (guanine-N(1)-)-methyltransferase from Xanthomonas campestris pv. campestris (strain 8004).